Consider the following 329-residue polypeptide: D-lactate dehydrogenase (329 aa).

Residues 154 to 155, Asp174, 205 to 206, Asn211, 232 to 234, and Asp258 each bind NAD(+); these read KI, CP, and TSR. Arg234 is a catalytic residue. Glu263 is an active-site residue. The Proton donor role is filled by His295.

This sequence belongs to the D-isomer specific 2-hydroxyacid dehydrogenase family.

The catalysed reaction is (R)-lactate + NAD(+) = pyruvate + NADH + H(+). Functionally, fermentative lactate dehydrogenase. In Escherichia coli (strain K12), this protein is D-lactate dehydrogenase (ldhA).